The chain runs to 1305 residues: Serine protease EspC (1305 aa).

The signal sequence occupies residues 1–53; the sequence is MNKIYALKYCHATGGLIAVSELASRVMKKAARGSLLALFNLSLYGAFLSASQA. The Peptidase S6 domain occupies 55–297; it reads QLNIDNVWAR…SILNQYDENT (243 aa). Residues H125, D153, and S256 each act as charge relay system in the active site. Positions 1039 to 1305 constitute an Autotransporter domain; sequence DTQGDAGVWA…AINANFRYSF (267 aa).

Post-translationally, cleaved to release the mature protein from the outer membrane.

The protein localises to the periplasm. Its subcellular location is the secreted. The protein resides in the cell surface. It localises to the cell outer membrane. Its activity is regulated as follows. Inhibition of cytotoxic activity by phenylmethylsulfonyl fluoride. Functionally, serine protease with enterotoxic and cytotoxic activities. Cleaves fodrin, but does not cause its redistribution within epithelial cells. The exact role of EspC in EPEC pathogenesis is still unknown. The polypeptide is Serine protease EspC (espC) (Escherichia coli O127:H6 (strain E2348/69 / EPEC)).